A 361-amino-acid polypeptide reads, in one-letter code: Peptide chain release factor 1 (361 aa).

An N5-methylglutamine modification is found at glutamine 238.

This sequence belongs to the prokaryotic/mitochondrial release factor family. Post-translationally, methylated by PrmC. Methylation increases the termination efficiency of RF1.

The protein localises to the cytoplasm. In terms of biological role, peptide chain release factor 1 directs the termination of translation in response to the peptide chain termination codons UAG and UAA. This is Peptide chain release factor 1 from Mesomycoplasma hyopneumoniae (strain 7448) (Mycoplasma hyopneumoniae).